We begin with the raw amino-acid sequence, 294 residues long: Tyrosine recombinase XerC (294 aa).

In terms of domain architecture, Core-binding (CB) spans 1–85; sequence MSRLVEDFFA…ACRGFYTWLV (85 aa). The 178-residue stretch at 106–283 folds into the Tyr recombinase domain; sequence KLPRILDADE…DFQYLSKVYD (178 aa). Catalysis depends on residues Arg145, Lys169, His235, Arg238, and His261. The active-site O-(3'-phospho-DNA)-tyrosine intermediate is the Tyr270.

The protein belongs to the 'phage' integrase family. XerC subfamily. In terms of assembly, forms a cyclic heterotetrameric complex composed of two molecules of XerC and two molecules of XerD.

It localises to the cytoplasm. Its function is as follows. Site-specific tyrosine recombinase, which acts by catalyzing the cutting and rejoining of the recombining DNA molecules. The XerC-XerD complex is essential to convert dimers of the bacterial chromosome into monomers to permit their segregation at cell division. It also contributes to the segregational stability of plasmids. This Xylella fastidiosa (strain M23) protein is Tyrosine recombinase XerC.